The following is a 33-amino-acid chain: Photosystem II reaction center protein Psb30 (33 aa).

Residues 5 to 25 (ILSQLIAIAVTLFLGPVVVIL) traverse the membrane as a helical segment.

The protein belongs to the Psb30/Ycf12 family. As to quaternary structure, PSII is composed of 1 copy each of membrane proteins PsbA, PsbB, PsbC, PsbD, PsbE, PsbF, PsbH, PsbI, PsbJ, PsbK, PsbL, PsbM, PsbT, PsbX, PsbY, PsbZ, Psb30/Ycf12, peripheral proteins of the oxygen-evolving complex and a large number of cofactors. It forms dimeric complexes.

The protein resides in the plastid. Its subcellular location is the chloroplast thylakoid membrane. Its function is as follows. A core subunit of photosystem II (PSII), probably helps stabilize the reaction center. The chain is Photosystem II reaction center protein Psb30 from Oedogonium cardiacum (Filamentous green alga).